A 328-amino-acid polypeptide reads, in one-letter code: PRFISVGYVDDTELVRFDSDAENPRYEPRARWMEQVEPEYWERNTQIAKDNEQSSRVDLRTLLRYYNQSAGGSHTIQRMYGCDVGSDGRLLRGYEQVAYDGCDYIALNEDLKTWTAADMAALITKHKWEQAGAAERRRAYLEGACVEWLSRHLKNGNATLLRTDSPKAHVTHHSRPEDKVTLRCWALGFYPADITLTWQLNGEELTQDMELVETRPAGDGTFQKWASVVVPLGKEQYYTCHVYHQGLPKPLTLRWEPPPSAVSNTVIIAVLVVLGAAIVTGAVVAFVMMRRRNTGGKGGDYALAPGSQTSDLSLPDCKVMVHDPHSLA.

The interval 1–71 is alpha-1; it reads PRFISVGYVD…LLRYYNQSAG (71 aa). The Extracellular portion of the chain corresponds to 1-265; the sequence is PRFISVGYVD…EPPPSAVSNT (265 aa). N67 is a glycosylation site (N-linked (GlcNAc...) asparagine). Residues 72-163 are alpha-2; that stretch reads GSHTIQRMYG…KNGNATLLRT (92 aa). An intrachain disulfide couples C82 to C145. N-linked (GlcNAc...) asparagine glycosylation occurs at N157. An alpha-3 region spans residues 164–255; sequence DSPKAHVTHH…GLPKPLTLRW (92 aa). Residues 166–252 form the Ig-like C1-type domain; that stretch reads PKAHVTHHSR…YHQGLPKPLT (87 aa). A disulfide bridge links C184 with C240. The connecting peptide stretch occupies residues 256 to 265; the sequence is EPPPSAVSNT. The helical transmembrane segment at 266 to 289 threads the bilayer; it reads VIIAVLVVLGAAIVTGAVVAFVMM. Residues 290–328 lie on the Cytoplasmic side of the membrane; the sequence is RRRNTGGKGGDYALAPGSQTSDLSLPDCKVMVHDPHSLA. A phosphoserine mark is found at S310 and S313.

The protein belongs to the MHC class I family. Heterodimer of an alpha chain and a beta chain (beta-2-microglobulin).

The protein resides in the membrane. Involved in the presentation of foreign antigens to the immune system. In Mus musculus (Mouse), this protein is H-2 class I histocompatibility antigen, K-Q alpha chain (H2-K1).